The chain runs to 100 residues: Large ribosomal subunit protein bL21 (100 aa).

Belongs to the bacterial ribosomal protein bL21 family. Part of the 50S ribosomal subunit. Contacts protein L20.

Functionally, this protein binds to 23S rRNA in the presence of protein L20. This Deinococcus deserti (strain DSM 17065 / CIP 109153 / LMG 22923 / VCD115) protein is Large ribosomal subunit protein bL21.